Here is a 228-residue protein sequence, read N- to C-terminus: Urease accessory protein UreF (228 aa).

This sequence belongs to the UreF family. UreD, UreF and UreG form a complex that acts as a GTP-hydrolysis-dependent molecular chaperone, activating the urease apoprotein by helping to assemble the nickel containing metallocenter of UreC. The UreE protein probably delivers the nickel.

It is found in the cytoplasm. Required for maturation of urease via the functional incorporation of the urease nickel metallocenter. In Brucella ovis (strain ATCC 25840 / 63/290 / NCTC 10512), this protein is Urease accessory protein UreF.